The chain runs to 397 residues: Formate-dependent phosphoribosylglycinamide formyltransferase (397 aa).

N(1)-(5-phospho-beta-D-ribosyl)glycinamide-binding positions include 22-23 and glutamate 82; that span reads EL. ATP-binding positions include arginine 114, lysine 155, 160–165, 195–198, and glutamate 203; these read SSGKGQ and EGFV. The 194-residue stretch at 119 to 312 folds into the ATP-grasp domain; the sequence is CLAAEELSLP…EFALHARAIL (194 aa). Mg(2+)-binding residues include glutamate 271 and glutamate 283. N(1)-(5-phospho-beta-D-ribosyl)glycinamide is bound by residues aspartate 290, lysine 360, and 367-368; that span reads RR.

It belongs to the PurK/PurT family. As to quaternary structure, homodimer.

The catalysed reaction is N(1)-(5-phospho-beta-D-ribosyl)glycinamide + formate + ATP = N(2)-formyl-N(1)-(5-phospho-beta-D-ribosyl)glycinamide + ADP + phosphate + H(+). The protein operates within purine metabolism; IMP biosynthesis via de novo pathway; N(2)-formyl-N(1)-(5-phospho-D-ribosyl)glycinamide from N(1)-(5-phospho-D-ribosyl)glycinamide (formate route): step 1/1. In terms of biological role, involved in the de novo purine biosynthesis. Catalyzes the transfer of formate to 5-phospho-ribosyl-glycinamide (GAR), producing 5-phospho-ribosyl-N-formylglycinamide (FGAR). Formate is provided by PurU via hydrolysis of 10-formyl-tetrahydrofolate. The sequence is that of Formate-dependent phosphoribosylglycinamide formyltransferase from Alcanivorax borkumensis (strain ATCC 700651 / DSM 11573 / NCIMB 13689 / SK2).